The chain runs to 311 residues: Methionyl-tRNA formyltransferase (311 aa).

Residue 110 to 113 (SLLP) participates in (6S)-5,6,7,8-tetrahydrofolate binding.

Belongs to the Fmt family.

The enzyme catalyses L-methionyl-tRNA(fMet) + (6R)-10-formyltetrahydrofolate = N-formyl-L-methionyl-tRNA(fMet) + (6S)-5,6,7,8-tetrahydrofolate + H(+). In terms of biological role, attaches a formyl group to the free amino group of methionyl-tRNA(fMet). The formyl group appears to play a dual role in the initiator identity of N-formylmethionyl-tRNA by promoting its recognition by IF2 and preventing the misappropriation of this tRNA by the elongation apparatus. The sequence is that of Methionyl-tRNA formyltransferase from Streptococcus thermophilus (strain ATCC BAA-250 / LMG 18311).